The sequence spans 367 residues: Phosphoribosylaminoimidazole-succinocarboxamide synthase (367 aa).

This sequence belongs to the SAICAR synthetase family.

The enzyme catalyses 5-amino-1-(5-phospho-D-ribosyl)imidazole-4-carboxylate + L-aspartate + ATP = (2S)-2-[5-amino-1-(5-phospho-beta-D-ribosyl)imidazole-4-carboxamido]succinate + ADP + phosphate + 2 H(+). It participates in purine metabolism; IMP biosynthesis via de novo pathway; 5-amino-1-(5-phospho-D-ribosyl)imidazole-4-carboxamide from 5-amino-1-(5-phospho-D-ribosyl)imidazole-4-carboxylate: step 1/2. The sequence is that of Phosphoribosylaminoimidazole-succinocarboxamide synthase from Vibrio parahaemolyticus serotype O3:K6 (strain RIMD 2210633).